An 848-amino-acid chain; its full sequence is ATP-dependent Clp protease ATP-binding subunit ClpC1 (848 aa).

The 143-residue stretch at 2 to 144 (FERFTDRARR…RQQVIQLLSG (143 aa)) folds into the Clp R domain. 2 repeat regions span residues 5-70 (FTDR…IGQG) and 80-144 (FTPR…LLSG). Residues 425–460 (DEKIADARREKESAIDAQDFEKAAALRDKEKQLVAQ) form the UVR domain. ATP contacts are provided by residues 553–560 (GPSGVGKT) and 617–626 (KPFSVVLFDE). Residues 811–848 (GQGEDAKFTFSGGPKRAETAEPDLAGAGAAGAPTAGTE) form a disordered region. The segment covering 835–848 (AGAGAAGAPTAGTE) has biased composition (low complexity).

This sequence belongs to the ClpA/ClpB family. ClpC subfamily.

In terms of biological role, ATP-dependent specificity component of the Clp protease. It directs the protease to specific substrates. Can perform chaperone functions in the absence of ClpP. Degrades anti-sigma-E factor RseA in the presence of ClpP2. The protein is ATP-dependent Clp protease ATP-binding subunit ClpC1 (clpC1) of Mycolicibacterium smegmatis (strain ATCC 700084 / mc(2)155) (Mycobacterium smegmatis).